The primary structure comprises 303 residues: uncharacterized protein (303 aa).

4 consecutive transmembrane segments (helical) span residues 55-77 (FLVK…LFIQ), 92-111 (PAVF…TKII), 208-230 (FSLP…ATSL), and 240-257 (IPHI…KILI).

The protein resides in the cell membrane. This is an uncharacterized protein from Bacillus subtilis (strain 168).